Here is a 242-residue protein sequence, read N- to C-terminus: Glycerol-3-phosphate acyltransferase (242 aa).

The next 6 helical transmembrane spans lie at 7–27 (ISLL…IMFA), 61–81 (IAIG…ILLI), 102–122 (YYLT…PVYF), 135–155 (GFVF…WWTI), 162–182 (VSLA…IPWL), and 201–221 (DWYI…IIIW).

It belongs to the PlsY family. In terms of assembly, probably interacts with PlsX.

The protein localises to the cell membrane. It carries out the reaction an acyl phosphate + sn-glycerol 3-phosphate = a 1-acyl-sn-glycero-3-phosphate + phosphate. Its pathway is lipid metabolism; phospholipid metabolism. Its function is as follows. Catalyzes the transfer of an acyl group from acyl-phosphate (acyl-PO(4)) to glycerol-3-phosphate (G3P) to form lysophosphatidic acid (LPA). This enzyme utilizes acyl-phosphate as fatty acyl donor, but not acyl-CoA or acyl-ACP. The chain is Glycerol-3-phosphate acyltransferase from Mycoplasmoides gallisepticum (strain R(low / passage 15 / clone 2)) (Mycoplasma gallisepticum).